Here is a 172-residue protein sequence, read N- to C-terminus: Acetolactate synthase small subunit (172 aa).

The 75-residue stretch at 4–78 (TLSVLVEDEA…NILKVDNITE (75 aa)) folds into the ACT domain.

This sequence belongs to the acetolactate synthase small subunit family. Dimer of large and small chains.

It localises to the plastid. The protein resides in the chloroplast. The enzyme catalyses 2 pyruvate + H(+) = (2S)-2-acetolactate + CO2. It functions in the pathway amino-acid biosynthesis; L-isoleucine biosynthesis; L-isoleucine from 2-oxobutanoate: step 1/4. Its pathway is amino-acid biosynthesis; L-valine biosynthesis; L-valine from pyruvate: step 1/4. In Cyanidium caldarium (Red alga), this protein is Acetolactate synthase small subunit (ilvH).